A 201-amino-acid polypeptide reads, in one-letter code: Small ribosomal subunit protein uS5 (201 aa).

The tract at residues 1-28 (MAGPQRRGSGAGGGERRDRKGRDGGAGA) is disordered. Residues 14 to 23 (GERRDRKGRD) show a composition bias toward basic and acidic residues. One can recognise an S5 DRBM domain in the interval 34–97 (YVERVVAINR…EEAKKHFFKV (64 aa)).

It belongs to the universal ribosomal protein uS5 family. As to quaternary structure, part of the 30S ribosomal subunit. Contacts proteins S4 and S8.

With S4 and S12 plays an important role in translational accuracy. Functionally, located at the back of the 30S subunit body where it stabilizes the conformation of the head with respect to the body. This chain is Small ribosomal subunit protein uS5, found in Streptomyces coelicolor (strain ATCC BAA-471 / A3(2) / M145).